The chain runs to 101 residues: ATP-dependent Clp protease adapter protein ClpS 2 (101 aa).

This sequence belongs to the ClpS family. In terms of assembly, binds to the N-terminal domain of the chaperone ClpA.

In terms of biological role, involved in the modulation of the specificity of the ClpAP-mediated ATP-dependent protein degradation. The polypeptide is ATP-dependent Clp protease adapter protein ClpS 2 (Mesorhizobium japonicum (strain LMG 29417 / CECT 9101 / MAFF 303099) (Mesorhizobium loti (strain MAFF 303099))).